Consider the following 294-residue polypeptide: N-acetylmuramic acid 6-phosphate etherase (294 aa).

The SIS domain occupies 56–219; the sequence is TSQALKKGGR…STLSMVSVGK (164 aa). Glu-84 (proton donor) is an active-site residue. Glu-115 is an active-site residue.

It belongs to the GCKR-like family. MurNAc-6-P etherase subfamily. In terms of assembly, homodimer.

It catalyses the reaction N-acetyl-D-muramate 6-phosphate + H2O = N-acetyl-D-glucosamine 6-phosphate + (R)-lactate. The protein operates within amino-sugar metabolism; 1,6-anhydro-N-acetylmuramate degradation. It participates in amino-sugar metabolism; N-acetylmuramate degradation. Its pathway is cell wall biogenesis; peptidoglycan recycling. In terms of biological role, specifically catalyzes the cleavage of the D-lactyl ether substituent of MurNAc 6-phosphate, producing GlcNAc 6-phosphate and D-lactate. Together with AnmK, is also required for the utilization of anhydro-N-acetylmuramic acid (anhMurNAc) either imported from the medium or derived from its own cell wall murein, and thus plays a role in cell wall recycling. The protein is N-acetylmuramic acid 6-phosphate etherase of Francisella philomiragia subsp. philomiragia (strain ATCC 25017 / CCUG 19701 / FSC 153 / O#319-036).